The following is a 311-amino-acid chain: Tricarboxylate transport protein, mitochondrial (311 aa).

The propeptide at 1–13 (MAAPRAPRALTAA) is removed in mature form. Solcar repeat units lie at residues 23–111 (THPG…LSNH), 122–208 (RRGL…LRNW), and 218–303 (MNPL…VVKL). 3 helical membrane passes run 29–46 (ILAG…TFPT), 86–105 (GLSS…FGMF), and 129–143 (LGAG…VCPM). Ser156 carries the phosphoserine modification. A run of 3 helical transmembrane segments spans residues 183-202 (GLTA…FFVM), 224-241 (GVFG…NTPL), and 278-297 (GTVP…FVIY).

Belongs to the mitochondrial carrier (TC 2.A.29) family. Possesses a short cleavable presequence, which, however, is found to be dispensable both for targeting to mitochondria and insertion into the inner membrane. However, the presequence is required to keep SLC25A1 in a soluble state and thus in an import-competent state. Mature SLC25A1 lacking the presequence is prone to aggregation.

It localises to the mitochondrion inner membrane. It carries out the reaction (S)-malate(in) + citrate(out) = (S)-malate(out) + citrate(in). The catalysed reaction is citrate(out) + succinate(in) = citrate(in) + succinate(out). The enzyme catalyses D-threo-isocitrate(in) + citrate(out) = D-threo-isocitrate(out) + citrate(in). It catalyses the reaction cis-aconitate(in) + citrate(out) = cis-aconitate(out) + citrate(in). It carries out the reaction trans-aconitate(in) + citrate(out) = trans-aconitate(out) + citrate(in). The catalysed reaction is phosphoenolpyruvate(in) + citrate(out) = phosphoenolpyruvate(out) + citrate(in). The enzyme catalyses maleate(in) + citrate(out) = maleate(out) + citrate(in). In terms of biological role, mitochondrial electroneutral antiporter that exports citrate from the mitochondria into the cytosol in exchange for malate. Also able to mediate the exchange of citrate for isocitrate, phosphoenolpyruvate, cis-aconitate and to a lesser extent trans-aconitate, maleate and succinate. In the cytoplasm, citrate plays important roles in fatty acid and sterol synthesis, regulation of glycolysis, protein acetylation, and other physiopathological processes. The chain is Tricarboxylate transport protein, mitochondrial (Slc25a1) from Rattus norvegicus (Rat).